Reading from the N-terminus, the 114-residue chain is Hydrogenase maturation factor HypA (114 aa).

His-2 contributes to the Ni(2+) binding site. Residues Cys-73, Cys-76, Cys-90, and Cys-93 each contribute to the Zn(2+) site.

The protein belongs to the HypA/HybF family.

Functionally, involved in the maturation of [NiFe] hydrogenases. Required for nickel insertion into the metal center of the hydrogenase. This is Hydrogenase maturation factor HypA from Chloroflexus aggregans (strain MD-66 / DSM 9485).